We begin with the raw amino-acid sequence, 105 residues long: Nitrogen fixation nifHD region GlnB-like protein 1 (105 aa).

It belongs to the P(II) protein family.

Functionally, could be involved in the regulation of nitrogen fixation. This is Nitrogen fixation nifHD region GlnB-like protein 1 (glnBA) from Methanobacterium ivanovii.